The chain runs to 116 residues: Ribonuclease P protein component (116 aa).

This sequence belongs to the RnpA family. As to quaternary structure, consists of a catalytic RNA component (M1 or rnpB) and a protein subunit.

The enzyme catalyses Endonucleolytic cleavage of RNA, removing 5'-extranucleotides from tRNA precursor.. Its function is as follows. RNaseP catalyzes the removal of the 5'-leader sequence from pre-tRNA to produce the mature 5'-terminus. It can also cleave other RNA substrates such as 4.5S RNA. The protein component plays an auxiliary but essential role in vivo by binding to the 5'-leader sequence and broadening the substrate specificity of the ribozyme. The polypeptide is Ribonuclease P protein component (Picosynechococcus sp. (strain ATCC 27264 / PCC 7002 / PR-6) (Agmenellum quadruplicatum)).